The following is a 308-amino-acid chain: MDWKGRDVISIRDFSKEDIETVLATAERLERELKEKGQLEYAKGKILATLFFEPSTRTRLSFESAMHRLGGAVIGFAEASTSSVKKGESLRDTIKTVEQYCDVIVIRHPKEGAARLAAEVAEVPVINAGDGSNQHPTQTLLDLYTIKKEFGRIDGLKIGLLGDLKYGRTVHSLAEALTFYDVELYLISPELLRMPRHIVEELREKGMKVVETTTLEDVIGKLDVLYVTRIQKERFPDEQEYLKVKGSYQVNLKVLEKAKDELRIMHPLPRVDEIHPEVDNTKHAIYFRQVFNGVPVRMALLALVLGVI.

Carbamoyl phosphate-binding residues include Arg-57 and Thr-58. Residue Lys-86 participates in L-aspartate binding. Carbamoyl phosphate-binding residues include Arg-107, His-135, and Gln-138. 2 residues coordinate L-aspartate: Arg-168 and Arg-229. The carbamoyl phosphate site is built by Leu-268 and Pro-269.

Belongs to the aspartate/ornithine carbamoyltransferase superfamily. ATCase family. In terms of assembly, heterooligomer of catalytic and regulatory chains.

It carries out the reaction carbamoyl phosphate + L-aspartate = N-carbamoyl-L-aspartate + phosphate + H(+). The protein operates within pyrimidine metabolism; UMP biosynthesis via de novo pathway; (S)-dihydroorotate from bicarbonate: step 2/3. Its function is as follows. Catalyzes the condensation of carbamoyl phosphate and aspartate to form carbamoyl aspartate and inorganic phosphate, the committed step in the de novo pyrimidine nucleotide biosynthesis pathway. This is Aspartate carbamoyltransferase catalytic subunit from Pyrococcus abyssi (strain GE5 / Orsay).